The following is a 379-amino-acid chain: Putative glutamate--cysteine ligase 2 (379 aa).

The protein belongs to the glutamate--cysteine ligase type 2 family. YbdK subfamily.

The catalysed reaction is L-cysteine + L-glutamate + ATP = gamma-L-glutamyl-L-cysteine + ADP + phosphate + H(+). Its function is as follows. ATP-dependent carboxylate-amine ligase which exhibits weak glutamate--cysteine ligase activity. The chain is Putative glutamate--cysteine ligase 2 from Roseiflexus castenholzii (strain DSM 13941 / HLO8).